A 512-amino-acid chain; its full sequence is Cytoplasmic tRNA 2-thiolation protein 2-B (512 aa).

Positions 196–215 (VTDSDSPGSSDKMYQSTCSR) are disordered. Over residues 199–214 (SDSPGSSDKMYQSTCS) the composition is skewed to polar residues.

It belongs to the CTU2/NCS2 family.

The protein localises to the cytoplasm. Its pathway is tRNA modification; 5-methoxycarbonylmethyl-2-thiouridine-tRNA biosynthesis. Its function is as follows. Plays a central role in 2-thiolation of mcm(5)S(2)U at tRNA wobble positions of tRNA(Lys), tRNA(Glu) and tRNA(Gln). May act by forming a heterodimer with ctu1/atpbd3 that ligates sulfur from thiocarboxylated urm1 onto the uridine of tRNAs at wobble position. The polypeptide is Cytoplasmic tRNA 2-thiolation protein 2-B (ctu2-b) (Xenopus laevis (African clawed frog)).